Reading from the N-terminus, the 208-residue chain is Uracil phosphoribosyltransferase (208 aa).

Residues Arg78, Arg103, and Asp130–Ser138 each bind 5-phospho-alpha-D-ribose 1-diphosphate. Residues Ile193 and Gly198–Ala200 each bind uracil. Asp199 serves as a coordination point for 5-phospho-alpha-D-ribose 1-diphosphate.

The protein belongs to the UPRTase family. Requires Mg(2+) as cofactor.

It carries out the reaction UMP + diphosphate = 5-phospho-alpha-D-ribose 1-diphosphate + uracil. Its pathway is pyrimidine metabolism; UMP biosynthesis via salvage pathway; UMP from uracil: step 1/1. With respect to regulation, allosterically activated by GTP. Catalyzes the conversion of uracil and 5-phospho-alpha-D-ribose 1-diphosphate (PRPP) to UMP and diphosphate. The chain is Uracil phosphoribosyltransferase from Shewanella amazonensis (strain ATCC BAA-1098 / SB2B).